A 360-amino-acid chain; its full sequence is 8-hydroxygeraniol dehydrogenase (360 aa).

Zn(2+) contacts are provided by Cys50, His72, Cys103, Cys106, Cys109, Cys117, and Cys166.

Belongs to the zinc-containing alcohol dehydrogenase family. It depends on Zn(2+) as a cofactor. As to expression, present in seedlings and vascular tissues (at protein level). Restricted to the epidermis.

It carries out the reaction (6E)-8-hydroxygeraniol + 2 NADP(+) = (6E)-8-oxogeranial + 2 NADPH + 2 H(+). Its function is as follows. Dehydrogenase involved in the biosynthesis of oxogeranial from hydroxygeraniol, a precursor of the terpenoid indole alkaloids such as vinblastine and vincristine. The chain is 8-hydroxygeraniol dehydrogenase (10HGO) from Catharanthus roseus (Madagascar periwinkle).